The primary structure comprises 347 residues: Quinolinate synthase (347 aa).

Iminosuccinate contacts are provided by H47 and S68. C113 lines the [4Fe-4S] cluster pocket. Residues Y139 to N141 and S156 contribute to the iminosuccinate site. A [4Fe-4S] cluster-binding site is contributed by C200. Residues H226–E228 and T243 contribute to the iminosuccinate site. [4Fe-4S] cluster is bound at residue C297.

Belongs to the quinolinate synthase family. Type 1 subfamily. [4Fe-4S] cluster serves as cofactor.

It is found in the cytoplasm. It carries out the reaction iminosuccinate + dihydroxyacetone phosphate = quinolinate + phosphate + 2 H2O + H(+). It participates in cofactor biosynthesis; NAD(+) biosynthesis; quinolinate from iminoaspartate: step 1/1. In terms of biological role, catalyzes the condensation of iminoaspartate with dihydroxyacetone phosphate to form quinolinate. This Salmonella choleraesuis (strain SC-B67) protein is Quinolinate synthase.